The following is a 244-amino-acid chain: Transcription initiation factor TFIID subunit 14 (244 aa).

The 134-residue stretch at 1–134 folds into the YEATS domain; sequence MVATVKRTIR…PLLTEELAKS (134 aa). Acylated histone binding regions lie at residues 59-61 and 81-83; these read HPT and WGG. Positions 133 to 169 are disordered; that stretch reads KSGSTEETTANTGTIGKRRTTTNTTAEPKAKRAKTGS. The span at 143–157 shows a compositional bias: low complexity; that stretch reads NTGTIGKRRTTTNTT. A Glycyl lysine isopeptide (Lys-Gly) (interchain with G-Cter in ubiquitin) cross-link involves residue Lys-181.

This sequence belongs to the TAF14 family. As to quaternary structure, the 1.2 MDa TFIID complex is composed of TATA binding protein (TBP) and the 14 TBP-associated factors. One copy of each TAF1, TAF2, TAF3, TAF7, TAF8, TAF11, TAF13, two copies of each TAF4, TAF5, TAF6, TAF9, TAF10, TAF12, and three copies of TAF14. TFIIF is composed of three different subunits: TFG1/RAP74, TFG2/RAP30 and TAF14. Component of the SWI/SNF global transcription activator complex. The 1.14 MDa SWI/SNF complex is composed of 11 different subunits: one copy each of SWI1, SNF2/SWI2, SNF5, SNF12/SWP73, ARP7/SWP61, ARP9/SWP59; two copies each of SWI3, SNF6, SNF11, SWP82; and three copies of TAF14/SWP29. Component of the chromatin-remodeling INO80 complex, at least composed of ARP4, ARP5, ARP8, RVB1, RVB2, TAF14, NHP10, IES1, IES3, IES4, IES6, ACT1, IES2, IES5 and INO80. Component of the NuA3 histone acetyltransferase (HAT) complex. The NuA3 HAT complex has 2 functionally distinct forms that participate in transcription. The NuA3b HAT complex contains an additional subunit, PDP3.

It is found in the nucleus. Functionally, functions as a component of the DNA-binding general transcription factor complex TFIID, the RNA polymerase II associated general transcription factor complex TFIIF, and the chromatin-remodeling complex SWI/SNF. Binding of TFIID to a promoter (with or without TATA element) is the initial step in preinitiation complex (PIC) formation. TFIID plays a key role in the regulation of gene expression by RNA polymerase II through different activities such as transcription activator interaction, core promoter recognition and selectivity, TFIIA and TFIIB interaction, chromatin modification (histone acetylation by TAF1), facilitation of DNA opening and initiation of transcription. TFIIF is essential for the initiation of transcription by RNA polymerase II. TFIIF functions include the recruitment of RNA polymerase II to the promoter bound DNA-TBP-TFIIB complex, decreasing the affinity of RNA polymerase II for non-specific DNA, allowing for the subsequent recruitment of TFIIE and TFIIH, and facilitating RNA polymerase II elongation. TAF14 acts as a chromatin reader that specifically recognizes and binds histones that are acylated. Recognizes and binds histone H3 acetylated or crotonylated at 'Lys-9' (H3K9ac and H3K9cr, respectively), with some preference for crotonylated lysine. Component of the SWI/SNF complex, an ATP-dependent chromatin-remodeling complex, is required for the positive and negative regulation of gene expression of a large number of genes. It changes chromatin structure by altering DNA-histone contacts within a nucleosome, leading eventually to a change in nucleosome position, thus facilitating or repressing binding of gene-specific transcription factors. Component of the NuA3 histone acetyltransferase complex. The NuA3 HAT complex has 2 functionally distinct forms. NuA3a binds H3K4me3, through the PHD finger of YNG1, and acetylates H3K14 at the promoter region of actively transcribed genes to promote transcription initiation. NuA3b binds H3K36me3 at the coding regions of actively transcribed genes, through the PWWP domain of PDP3, and coordinates transcription elongation. Does not bind DNA. The chain is Transcription initiation factor TFIID subunit 14 (TAF14) from Saccharomyces cerevisiae (strain ATCC 204508 / S288c) (Baker's yeast).